Consider the following 492-residue polypeptide: Tumor necrosis factor receptor superfamily member 8 (492 aa).

The signal sequence occupies residues 1–18 (MSILLKAAGLLFLGMLQA). At 19–282 (FPKDRPLDTT…STGTPFLDPG (264 aa)) the chain is on the extracellular side. TNFR-Cys repeat units lie at residues 57–104 (PCPQ…PRIC) and 105–141 (ECQP…NTIC). Intrachain disulfides connect C58-C80, C83-C96, C86-C104, and C123-C141. Residues 141–178 (CDLPSPGSGPNGSNPDDCKTLTSHTTPQAIPTLESPAN) form a disordered region. Residues 144 to 155 (PSPGSGPNGSNP) are compositionally biased toward low complexity. N151, N178, and N224 each carry an N-linked (GlcNAc...) asparagine glycan. Positions 160-178 (TLTSHTTPQAIPTLESPAN) are enriched in polar residues. A helical transmembrane segment spans residues 283-303 (SMLFWVAMVVLLVGSASFLLC). The Cytoplasmic segment spans residues 304–492 (YWKACRRRFQ…DHEPTTVSEK (189 aa)). Phosphoserine occurs at positions 334 and 348. Disordered regions lie at residues 336–366 (PTEK…PPAV) and 432–492 (PEGR…VSEK). Polar residues predominate over residues 339–360 (KLTQLQRSGSVTDSSAGHTLSP). Composition is skewed to basic and acidic residues over residues 450–459 (EVDHTPHYPE) and 478–492 (EGGK…VSEK).

It belongs to the TNFR8 family. As to quaternary structure, interacts with TRAF1, TRAF2, TRAF3 and TRAF5. As to expression, very low level of expression. Detected in spleen, thymus and lung. Highly expressed in HTLV-1 infected T-cell lines.

The protein resides in the cell membrane. Receptor for TNFSF8/CD30L. May play a role in the regulation of cellular growth and transformation of activated lymphoblasts. Regulates gene expression through activation of NF-kappa-B. The sequence is that of Tumor necrosis factor receptor superfamily member 8 from Rattus norvegicus (Rat).